Reading from the N-terminus, the 270-residue chain is uncharacterized protein (270 aa).

The segment at 235–270 (LADSDLEADSDDSESFEFVENPEPSENGSEPTIKND) is disordered. Acidic residues predominate over residues 238–251 (SDLEADSDDSESFE). Low complexity predominate over residues 255-270 (NPEPSENGSEPTIKND).

This is an uncharacterized protein from Halorubrum sp. PV6 (HRPV-1).